Here is a 101-residue protein sequence, read N- to C-terminus: Small ribosomal subunit protein uS10 (101 aa).

The protein belongs to the universal ribosomal protein uS10 family. As to quaternary structure, part of the 30S ribosomal subunit.

Involved in the binding of tRNA to the ribosomes. The polypeptide is Small ribosomal subunit protein uS10 (Porphyromonas gingivalis (strain ATCC 33277 / DSM 20709 / CIP 103683 / JCM 12257 / NCTC 11834 / 2561)).